The following is a 416-amino-acid chain: Gamma-glutamyl phosphate reductase (416 aa).

Belongs to the gamma-glutamyl phosphate reductase family.

The protein resides in the cytoplasm. It catalyses the reaction L-glutamate 5-semialdehyde + phosphate + NADP(+) = L-glutamyl 5-phosphate + NADPH + H(+). The protein operates within amino-acid biosynthesis; L-proline biosynthesis; L-glutamate 5-semialdehyde from L-glutamate: step 2/2. In terms of biological role, catalyzes the NADPH-dependent reduction of L-glutamate 5-phosphate into L-glutamate 5-semialdehyde and phosphate. The product spontaneously undergoes cyclization to form 1-pyrroline-5-carboxylate. The polypeptide is Gamma-glutamyl phosphate reductase (Streptococcus thermophilus).